The sequence spans 212 residues: Adenylate kinase (212 aa).

10 to 15 is a binding site for ATP; sequence GAGKGT. The tract at residues 30-59 is NMP; it reads STGDMFRAAMANQTEMGVLAKSYIDKGELV. Residues Thr31, Arg36, 57-59, 86-89, and Gln93 contribute to the AMP site; these read ELV and GYPR. Residues 127–159 are LID; that stretch reads GRIIHRVTGETFHKVFNPPVDYKEEDYYQREDD. Residues Arg128 and 137–138 each bind ATP; that span reads TF. AMP-binding residues include Arg156 and Arg167. An ATP-binding site is contributed by Gln195.

Belongs to the adenylate kinase family. Monomer.

The protein resides in the cytoplasm. The catalysed reaction is AMP + ATP = 2 ADP. It participates in purine metabolism; AMP biosynthesis via salvage pathway; AMP from ADP: step 1/1. Its function is as follows. Catalyzes the reversible transfer of the terminal phosphate group between ATP and AMP. Plays an important role in cellular energy homeostasis and in adenine nucleotide metabolism. The sequence is that of Adenylate kinase from Streptococcus pneumoniae serotype 4 (strain ATCC BAA-334 / TIGR4).